We begin with the raw amino-acid sequence, 200 residues long: Snake venom serine protease VaSP1 (200 aa).

A Peptidase S1 domain is found at 1-200 (VIGGDECNIN…EIQGIVSYGK (200 aa)). Active-site charge relay system residues include Asp-88 and Ser-182.

Monomer. N-glycosylated. The protein exist in multiple isoforms. In terms of tissue distribution, expressed by the venom gland.

The protein resides in the secreted. Inhibited by Pefabloc (90% inhibition), DTT (90%), Zn(2+) (80%), trypsin inhibitor II (50%), and benzamidine (45%), but not inhibited by EDTA, Ca(2+), Mg(2+) and L-Cys. In terms of biological role, snake venom serine protease active on several blood coagulation enzymes. It completely cleaves fibrinogen Aalpha chain (FGA) after 120 minutes, partially cleaves Bbeta chain (FGB) (overnight) and has no activity on gamma chain. It does not release fibrinopeptides A and/or B exclusively, since the enzyme does not provoke fibrin polymerisation. It also degrades fibrin as efficiently as plasmin, and exhibits potent ability to cleave plasminogen and prothrombin, as well as heavy chain of factor X (F10). In vitro, it cleaves insulin B-chain (at positions His38-Leu39, Ala40-Leu41 and Tyr16-Leu17). This chain is Snake venom serine protease VaSP1, found in Vipera ammodytes ammodytes (Western sand viper).